The primary structure comprises 313 residues: Kazal-type serine protease inhibitor domain-containing protein 1 (313 aa).

A signal peptide spans 1–37 (MPRVFTGLPANYAAPTLALSLLLPLLLVVWTQLPVSA). Positions 56 to 136 (EGEGCAPCRP…EVPEPLCVCR (81 aa)) constitute an IGFBP N-terminal domain. 7 disulfides stabilise this stretch: C60–C83, C63–C85, C68–C86, C74–C89, C97–C115, C109–C133, and C142–C175. Positions 127–177 (EVPEPLCVCRSQRPLCGSDGRTYAQICRLQEAARARLDANLTVVHPGPCES) constitute a Kazal-like domain. N-linked (GlcNAc...) asparagine glycans are attached at residues N166 and N190. Residues 179–276 (PQILSQPHNI…GQAEASATLT (98 aa)) form the Ig-like C2-type domain. An intrachain disulfide couples C200 to C260. N284 carries N-linked (GlcNAc...) asparagine glycosylation. Residues 290–313 (QLQSRSLFPEEEEEAESEELGDYY) are disordered. A compositionally biased stretch (acidic residues) spans 298-313 (PEEEEEAESEELGDYY).

In terms of tissue distribution, highly expressed in the spleen. Moderately expressed in the skin, lung and urinary bladder. Weakly expressed in the brain, tongue, esophagus, stomach, large intestine, liver and bone. Expressed in osteoblastic cells during bone regeneration. Expressed in secretory osteoblasts in the tooth.

It is found in the secreted. It localises to the extracellular space. Its subcellular location is the extracellular matrix. Functionally, involved in the proliferation of osteoblasts during bone formation and bone regeneration. Promotes matrix assembly. This is Kazal-type serine protease inhibitor domain-containing protein 1 (Kazald1) from Mus musculus (Mouse).